The following is a 459-amino-acid chain: Phosphoglucosamine mutase (459 aa).

Ser105 serves as the catalytic Phosphoserine intermediate. Mg(2+)-binding residues include Ser105, Asp252, Asp254, and Asp256. At Ser105 the chain carries Phosphoserine.

Belongs to the phosphohexose mutase family. Mg(2+) serves as cofactor. Activated by phosphorylation.

The catalysed reaction is alpha-D-glucosamine 1-phosphate = D-glucosamine 6-phosphate. Functionally, catalyzes the conversion of glucosamine-6-phosphate to glucosamine-1-phosphate. The chain is Phosphoglucosamine mutase from Bifidobacterium adolescentis (strain ATCC 15703 / DSM 20083 / NCTC 11814 / E194a).